A 171-amino-acid chain; its full sequence is uncharacterized protein (171 aa).

The PfpI endopeptidase domain maps to 3 to 171 (KKVAIILANE…FNREIVKQLQ (169 aa)).

This sequence belongs to the peptidase C56 family.

This is an uncharacterized protein from Staphylococcus aureus (strain MRSA252).